Consider the following 349-residue polypeptide: CCN family member 2 (349 aa).

The first 26 residues, 1 to 26, serve as a signal peptide directing secretion; that stretch reads MTAASMGPVRVAFVVLLALCSRPAVG. Positions 27-98 constitute an IGFBP N-terminal domain; sequence QNCSGPCRCP…NRKIGVCTAK (72 aa). Asparagine 28 carries an N-linked (GlcNAc...) asparagine glycan. Cystine bridges form between cysteine 29-cysteine 54, cysteine 33-cysteine 56, cysteine 35-cysteine 57, cysteine 43-cysteine 60, cysteine 68-cysteine 82, and cysteine 74-cysteine 95. Positions 101–167 constitute a VWFC domain; the sequence is APCIFGGTVY…GKCCEEWVCD (67 aa). In terms of domain architecture, TSP type-1 spans 198–243; that stretch reads NCLVQTTEWSACSKTCGMGISTRVTNDNASCRLEKQSRLCMVRPCE. The N-linked (GlcNAc...) asparagine glycan is linked to asparagine 225. The heparin-binding stretch occupies residues 247–349; it reads EENIKKGKKC…YYRKMYGDMA (103 aa). 5 disulfides stabilise this stretch: cysteine 256-cysteine 293, cysteine 273-cysteine 307, cysteine 284-cysteine 323, cysteine 287-cysteine 325, and cysteine 292-cysteine 329. Residues 256–330 form the CTCK domain; that stretch reads CIRTPKISKP…KTCACHYNCP (75 aa).

It belongs to the CCN family. Monomer. Interacts with TSKU. In terms of tissue distribution, expressed in bone marrow and thymic cells. Also expressed one of two Wilms tumors tested.

It is found in the secreted. The protein resides in the extracellular space. It localises to the extracellular matrix. Functionally, major connective tissue mitoattractant secreted by vascular endothelial cells. Promotes proliferation and differentiation of chondrocytes. Is involved in the stimulation of osteoblast differentiation and has a critical role in osteogenesis. Mediates heparin- and divalent cation-dependent cell adhesion in many cell types including fibroblasts, myofibroblasts, endothelial and epithelial cells. Enhances fibroblast growth factor-induced DNA synthesis. The chain is CCN family member 2 from Homo sapiens (Human).